The primary structure comprises 104 residues: UPF0473 protein LGAS_0424 (104 aa).

The protein belongs to the UPF0473 family.

In Lactobacillus gasseri (strain ATCC 33323 / DSM 20243 / BCRC 14619 / CIP 102991 / JCM 1131 / KCTC 3163 / NCIMB 11718 / NCTC 13722 / AM63), this protein is UPF0473 protein LGAS_0424.